A 401-amino-acid chain; its full sequence is Phosphonopyruvate decarboxylase (401 aa).

The segment at 382 to 401 (WPASAVGSGTRAAAGSAGDR) is disordered. The segment covering 384-401 (ASAVGSGTRAAAGSAGDR) has biased composition (low complexity).

Belongs to the TPP enzyme family. Thiamine diphosphate serves as cofactor. Mg(2+) is required as a cofactor.

It catalyses the reaction 3-phosphonopyruvate + H(+) = phosphonoacetaldehyde + CO2. The protein operates within secondary metabolite biosynthesis; bialaphos biosynthesis. Its function is as follows. Involved in the biosynthesis of phosphinothricin tripeptide (PTT), also known as bialaphos (BA), a natural-product antibiotic and potent herbicide. Catalyzes the decarboxylation of phosphonopyruvate (PnPy) to generate phosphonoacetaldehyde (PnAA). The protein is Phosphonopyruvate decarboxylase of Streptomyces hygroscopicus.